We begin with the raw amino-acid sequence, 337 residues long: Casein kinase II subunit alpha (337 aa).

The Protein kinase domain maps to 47–332; the sequence is YEIIRKIGRG…TREAMEHPYF (286 aa). ATP-binding positions include 53–61 and K76; that span reads IGRGKYSEV. D164 functions as the Proton acceptor in the catalytic mechanism.

Belongs to the protein kinase superfamily. CMGC Ser/Thr protein kinase family. CK2 subfamily. In terms of assembly, tetramer of two alpha and two beta chains.

The enzyme catalyses L-seryl-[protein] + ATP = O-phospho-L-seryl-[protein] + ADP + H(+). It catalyses the reaction L-threonyl-[protein] + ATP = O-phospho-L-threonyl-[protein] + ADP + H(+). Its function is as follows. Casein kinases are operationally defined by their preferential utilization of acidic proteins such as caseins as substrates. The alpha chain contains the catalytic site. This Dictyostelium discoideum (Social amoeba) protein is Casein kinase II subunit alpha (casK).